Here is a 452-residue protein sequence, read N- to C-terminus: Cobyrinate a,c-diamide synthase (452 aa).

Residues 248-441 enclose the GATase cobBQ-type domain; the sequence is RVAYALDAAF…LHIHFYQNLL (194 aa). Cysteine 330 serves as the catalytic Nucleophile.

This sequence belongs to the CobB/CbiA family. Mg(2+) is required as a cofactor.

It catalyses the reaction cob(II)yrinate + 2 L-glutamine + 2 ATP + 2 H2O = cob(II)yrinate a,c diamide + 2 L-glutamate + 2 ADP + 2 phosphate + 2 H(+). Its pathway is cofactor biosynthesis; adenosylcobalamin biosynthesis; cob(II)yrinate a,c-diamide from sirohydrochlorin (anaerobic route): step 10/10. In terms of biological role, catalyzes the ATP-dependent amidation of the two carboxylate groups at positions a and c of cobyrinate, using either L-glutamine or ammonia as the nitrogen source. In Listeria monocytogenes serotype 4b (strain F2365), this protein is Cobyrinate a,c-diamide synthase.